The following is a 1047-amino-acid chain: Isoleucine--tRNA ligase (1047 aa).

The 'HIGH' region signature appears at 52–62 (PTANGMPGAHH). The 'KMSKS' region motif lies at 600-604 (KMSKH). Lys-603 contributes to the ATP binding site.

This sequence belongs to the class-I aminoacyl-tRNA synthetase family. IleS type 2 subfamily. Monomer. Zn(2+) is required as a cofactor.

The protein resides in the cytoplasm. The catalysed reaction is tRNA(Ile) + L-isoleucine + ATP = L-isoleucyl-tRNA(Ile) + AMP + diphosphate. Functionally, catalyzes the attachment of isoleucine to tRNA(Ile). As IleRS can inadvertently accommodate and process structurally similar amino acids such as valine, to avoid such errors it has two additional distinct tRNA(Ile)-dependent editing activities. One activity is designated as 'pretransfer' editing and involves the hydrolysis of activated Val-AMP. The other activity is designated 'posttransfer' editing and involves deacylation of mischarged Val-tRNA(Ile). In Streptomyces avermitilis (strain ATCC 31267 / DSM 46492 / JCM 5070 / NBRC 14893 / NCIMB 12804 / NRRL 8165 / MA-4680), this protein is Isoleucine--tRNA ligase.